A 670-amino-acid chain; its full sequence is DUF724 domain-containing protein 1 (670 aa).

Disordered stretches follow at residues 283-315 (HNGPQQKPVKESPSNAIKQKPMCSSSGARPMTP) and 368-445 (ANAE…NNDD). Composition is skewed to polar residues over residues 294 to 309 (SPSNAIKQKPMCSSSG), 379 to 392 (RNQNCLRNDSTQQM), and 426 to 442 (CNGSESEISNTGKSICN). Residues 484–669 (PFAKKLPFWK…LEFQTTVSTP (186 aa)) form the DUF724 domain.

As to expression, expressed in stems and flowers.

The protein localises to the nucleus. Functionally, may be involved in the polar growth of plant cells via transportation of RNAs. The chain is DUF724 domain-containing protein 1 from Arabidopsis thaliana (Mouse-ear cress).